The chain runs to 152 residues: Nucleoplasmin-like protein (152 aa).

Over residues Glu-109–Asp-128 the composition is skewed to acidic residues. A disordered region spans residues Glu-109–Lys-152. Over residues Lys-136–Asn-145 the composition is skewed to basic and acidic residues.

Belongs to the nucleoplasmin family. In terms of assembly, decamer formed by two pentameric rings associated in a head-to-head fashion.

The protein resides in the nucleus. Binds to core histones and functions in the ATP-facilitated assembly of approximately regularly spaced nucleosomal arrays. May participate in parallel with other histone-binding proteins such as NAP-1. Its function is as follows. Inactive for chromatin assembly. In vitro it appears to form a high molecular mass aggregate with the core histones. The sequence is that of Nucleoplasmin-like protein (Nlp) from Drosophila melanogaster (Fruit fly).